Consider the following 113-residue polypeptide: U11-theraphotoxin-Hhn1a (113 aa).

The N-terminal stretch at 1–21 (MNTVRVTFLLVFVLAVSLGQA) is a signal peptide. Residues 22–74 (DKDENRMEVQEKTEQGKSYLDFAENLLLQKLEELEAKLLEEDSEESRNSRQKR) constitute a propeptide that is removed on maturation. A disordered region spans residues 61 to 83 (EEDSEESRNSRQKRCIGEGVPCD). 3 disulfide bridges follow: Cys75–Cys90, Cys82–Cys95, and Cys89–Cys110.

Belongs to the neurotoxin 14 (magi-1) family. 01 (HNTX-16) subfamily. As to expression, expressed by the venom gland.

The protein resides in the secreted. Probable ion channel inhibitor. This is U11-theraphotoxin-Hhn1a from Cyriopagopus hainanus (Chinese bird spider).